The chain runs to 644 residues: Macrolide export ATP-binding/permease protein MacB (644 aa).

In terms of domain architecture, ABC transporter spans 4–242; that stretch reads IECKNINRCF…SNVGRIREKA (239 aa). 40–47 serves as a coordination point for ATP; sequence GQSGSGKS. Transmembrane regions (helical) follow at residues 270–290, 524–544, 574–594, and 607–627; these read LLTM…VALG, IALI…LVSV, LICI…SLVF, and AASV…FGFM.

Belongs to the ABC transporter superfamily. Macrolide exporter (TC 3.A.1.122) family. Homodimer.

It localises to the cell inner membrane. Its function is as follows. Non-canonical ABC transporter that contains transmembrane domains (TMD), which form a pore in the inner membrane, and an ATP-binding domain (NBD), which is responsible for energy generation. Confers resistance against macrolides. The sequence is that of Macrolide export ATP-binding/permease protein MacB from Neisseria gonorrhoeae (strain ATCC 700825 / FA 1090).